The chain runs to 99 residues: Small ribosomal subunit protein uS19 (99 aa).

The interval 77–99 (TRTFHGHSGDKKAKVAKGGPGGR) is disordered.

This sequence belongs to the universal ribosomal protein uS19 family.

In terms of biological role, protein S19 forms a complex with S13 that binds strongly to the 16S ribosomal RNA. This Sorangium cellulosum (strain So ce56) (Polyangium cellulosum (strain So ce56)) protein is Small ribosomal subunit protein uS19.